A 195-amino-acid polypeptide reads, in one-letter code: Protein GrpE (195 aa).

Residues 1 to 20 (MSSKEQKTPDEQVLDQKEAA) show a composition bias toward basic and acidic residues. The interval 1–40 (MSSKEQKTPDEQVLDQKEAAKGQQADAAPETADVADPRDE) is disordered.

This sequence belongs to the GrpE family. Homodimer.

It localises to the cytoplasm. Participates actively in the response to hyperosmotic and heat shock by preventing the aggregation of stress-denatured proteins, in association with DnaK and GrpE. It is the nucleotide exchange factor for DnaK and may function as a thermosensor. Unfolded proteins bind initially to DnaJ; upon interaction with the DnaJ-bound protein, DnaK hydrolyzes its bound ATP, resulting in the formation of a stable complex. GrpE releases ADP from DnaK; ATP binding to DnaK triggers the release of the substrate protein, thus completing the reaction cycle. Several rounds of ATP-dependent interactions between DnaJ, DnaK and GrpE are required for fully efficient folding. This is Protein GrpE from Pectobacterium atrosepticum (strain SCRI 1043 / ATCC BAA-672) (Erwinia carotovora subsp. atroseptica).